Here is a 224-residue protein sequence, read N- to C-terminus: uncharacterized protein (224 aa).

The next 6 helical transmembrane spans lie at 25–45 (MMLA…IPFF), 54–74 (ISVV…SLTI), 91–111 (IGVL…RLYF), 119–139 (FCWI…LTTL), 142–162 (ILIT…NFLI), and 174–194 (HFFF…YSFF).

It localises to the cell membrane. This is an uncharacterized protein from Mycoplasma genitalium (strain ATCC 33530 / DSM 19775 / NCTC 10195 / G37) (Mycoplasmoides genitalium).